The primary structure comprises 451 residues: Secreted RxLR effector protein 111 (451 aa).

The signal sequence occupies residues 1–19; sequence MRGTLATALLLVASCRIAA. A RxLR-dEER motif is present at residues 48-69; sequence RFLRDNREQRVALALTAANESR. An N-linked (GlcNAc...) asparagine glycan is attached at Asn66. Composition is skewed to polar residues over residues 175-184 and 413-426; these read RKTLSKTQFK and SPAS…QRTG. Disordered stretches follow at residues 175 to 194 and 404 to 451; these read RKTL…STKR and IPLQ…NKHA. Basic and acidic residues predominate over residues 437-451; it reads PERDSFRHIESNKHA.

This sequence belongs to the RxLR effector family.

It localises to the secreted. The protein localises to the host nucleus. Functionally, secreted effector that acts as an elicitor that induces cell death in host plant cells. This Plasmopara viticola (Downy mildew of grapevine) protein is Secreted RxLR effector protein 111.